Here is a 147-residue protein sequence, read N- to C-terminus: D-aminoacyl-tRNA deacylase (147 aa).

The Gly-cisPro motif, important for rejection of L-amino acids signature appears at 136-137 (GP).

The protein belongs to the DTD family. As to quaternary structure, homodimer.

The protein localises to the cytoplasm. The enzyme catalyses glycyl-tRNA(Ala) + H2O = tRNA(Ala) + glycine + H(+). It catalyses the reaction a D-aminoacyl-tRNA + H2O = a tRNA + a D-alpha-amino acid + H(+). Functionally, an aminoacyl-tRNA editing enzyme that deacylates mischarged D-aminoacyl-tRNAs. Also deacylates mischarged glycyl-tRNA(Ala), protecting cells against glycine mischarging by AlaRS. Acts via tRNA-based rather than protein-based catalysis; rejects L-amino acids rather than detecting D-amino acids in the active site. By recycling D-aminoacyl-tRNA to D-amino acids and free tRNA molecules, this enzyme counteracts the toxicity associated with the formation of D-aminoacyl-tRNA entities in vivo and helps enforce protein L-homochirality. This Streptococcus thermophilus (strain CNRZ 1066) protein is D-aminoacyl-tRNA deacylase.